Consider the following 552-residue polypeptide: Asparagine--tRNA ligase, cytoplasmic (552 aa).

A disordered region spans residues 1–23; it reads MSQVYVNEKTGADSTDVSGSEQQ. The span at 12–23 shows a compositional bias: polar residues; sequence ADSTDVSGSEQQ.

Belongs to the class-II aminoacyl-tRNA synthetase family.

Its subcellular location is the cytoplasm. The catalysed reaction is tRNA(Asn) + L-asparagine + ATP = L-asparaginyl-tRNA(Asn) + AMP + diphosphate + H(+). In Debaryomyces hansenii (strain ATCC 36239 / CBS 767 / BCRC 21394 / JCM 1990 / NBRC 0083 / IGC 2968) (Yeast), this protein is Asparagine--tRNA ligase, cytoplasmic (DED81).